The chain runs to 273 residues: 4-hydroxy-tetrahydrodipicolinate reductase (273 aa).

Residues G11–M16 and G106–T108 each bind NAD(+). The active-site Proton donor/acceptor is the H162. (S)-2,3,4,5-tetrahydrodipicolinate is bound at residue H163. The active-site Proton donor is K166. A (S)-2,3,4,5-tetrahydrodipicolinate-binding site is contributed by G172 to T173.

It belongs to the DapB family.

It is found in the cytoplasm. It catalyses the reaction (S)-2,3,4,5-tetrahydrodipicolinate + NAD(+) + H2O = (2S,4S)-4-hydroxy-2,3,4,5-tetrahydrodipicolinate + NADH + H(+). The enzyme catalyses (S)-2,3,4,5-tetrahydrodipicolinate + NADP(+) + H2O = (2S,4S)-4-hydroxy-2,3,4,5-tetrahydrodipicolinate + NADPH + H(+). It participates in amino-acid biosynthesis; L-lysine biosynthesis via DAP pathway; (S)-tetrahydrodipicolinate from L-aspartate: step 4/4. Catalyzes the conversion of 4-hydroxy-tetrahydrodipicolinate (HTPA) to tetrahydrodipicolinate. This Synechococcus sp. (strain RCC307) protein is 4-hydroxy-tetrahydrodipicolinate reductase.